The following is a 404-amino-acid chain: Multidrug resistance protein MdtG (404 aa).

Helical transmembrane passes span 19 to 39 (LGCF…PLYV), 56 to 76 (LVFS…GGLA), 90 to 110 (LGMA…QFLI), 113 to 133 (ALLG…ATQV), 144 to 164 (TLST…GLLA), 171 to 191 (PVFF…FFFI), 222 to 242 (LFVT…ILTL), 254 to 274 (IAFI…LSAP), 288 to 308 (ILIV…FVQT), 317 to 337 (FLLG…LVYN), and 376 to 396 (AVFC…WNSL).

The protein belongs to the major facilitator superfamily. DHA1 family. MdtG (TC 2.A.1.2.20) subfamily.

The protein localises to the cell inner membrane. This is Multidrug resistance protein MdtG from Salmonella dublin (strain CT_02021853).